The sequence spans 120 residues: UPF0231 protein Spro_4007 (120 aa).

This sequence belongs to the UPF0231 family.

The chain is UPF0231 protein Spro_4007 from Serratia proteamaculans (strain 568).